The sequence spans 277 residues: Large ribosomal subunit protein uL2c (277 aa).

2 disordered regions span residues 24–57 (IVQS…RGGG) and 226–266 (NAAD…HKYS).

This sequence belongs to the universal ribosomal protein uL2 family. As to quaternary structure, part of the 50S ribosomal subunit.

It localises to the plastid. The protein localises to the chloroplast. This Zygnema circumcarinatum (Green alga) protein is Large ribosomal subunit protein uL2c (rpl2).